Here is a 351-residue protein sequence, read N- to C-terminus: Nicotinate-nucleotide--dimethylbenzimidazole phosphoribosyltransferase (351 aa).

Glutamate 317 acts as the Proton acceptor in catalysis.

It belongs to the CobT family.

It catalyses the reaction 5,6-dimethylbenzimidazole + nicotinate beta-D-ribonucleotide = alpha-ribazole 5'-phosphate + nicotinate + H(+). It participates in nucleoside biosynthesis; alpha-ribazole biosynthesis; alpha-ribazole from 5,6-dimethylbenzimidazole: step 1/2. Its function is as follows. Catalyzes the synthesis of alpha-ribazole-5'-phosphate from nicotinate mononucleotide (NAMN) and 5,6-dimethylbenzimidazole (DMB). The polypeptide is Nicotinate-nucleotide--dimethylbenzimidazole phosphoribosyltransferase (Bradyrhizobium sp. (strain BTAi1 / ATCC BAA-1182)).